The primary structure comprises 508 residues: Splicing regulatory glutamine/lysine-rich protein 1 (508 aa).

Residues 66-142 (RTVYVGNLNS…RPLKINHSNN (77 aa)) enclose the RRM domain. 2 positions are modified to phosphoserine: Ser-171 and Ser-184. Residues 173–508 (ISAAIEPESG…ENLSTKTEAV (336 aa)) are disordered. A compositionally biased stretch (basic and acidic residues) spans 180–189 (ESGKSNERKG). Basic residues predominate over residues 190–259 (GRSRSHTRSK…KSRSRSHSRD (70 aa)). Over residues 260-355 (KRKDTREKIK…DRSKEIDEKR (96 aa)) the composition is skewed to basic and acidic residues. Thr-363 is subject to Phosphothreonine. The span at 372 to 388 (RRSRSSSRERRRRRSRS) shows a compositional bias: basic residues. Positions 419–488 (REKERDHISE…DAPRTEENKI (70 aa)) are enriched in basic and acidic residues. Residues 489–508 (QHNGNCQLNEENLSTKTEAV) show a composition bias toward polar residues. Lys-504 is covalently cross-linked (Glycyl lysine isopeptide (Lys-Gly) (interchain with G-Cter in SUMO2)).

This sequence belongs to the splicing factor SR family. In terms of assembly, homodimer. Binds SFRS1, SFRS2, SFRS3 and SFRS6. Interacts with the spliceosome. Interacts with SREK1IP1.

It is found in the nucleus. Its function is as follows. Participates in the regulation of alternative splicing by modulating the activity of other splice facors. Inhibits the splicing activity of SFRS1, SFRS2 and SFRS6. Augments the splicing activity of SFRS3. The polypeptide is Splicing regulatory glutamine/lysine-rich protein 1 (SREK1) (Homo sapiens (Human)).